Here is a 1196-residue protein sequence, read N- to C-terminus: Beta/alpha-amylase (1196 aa).

The signal sequence occupies residues 1 to 35; the sequence is MTLYRSLWKKGCMLLLSLVLSLTAFIGSPSNTASA. A beta-amylase region spans residues 36 to 454; the sequence is AVADDFQASV…IISKAKPDNN (419 aa). Position 76 (Asp-76) interacts with substrate. 2 residues coordinate Ca(2+): Glu-83 and Asp-87. Residues His-116 and Asp-124 each coordinate substrate. Cys-118 and Cys-126 form a disulfide bridge. Glu-170 contributes to the Ca(2+) binding site. Glu-198 acts as the Proton donor in catalysis. Substrate-binding residues include Lys-314, His-319, and Thr-357. Catalysis depends on Glu-394, which acts as the Proton acceptor. Residues 395 to 396 and Arg-423 each bind substrate; that span reads NA. 2 repeats span residues 455 to 558 and 565 to 668; these read GGTG…APAG and GGTT…APSG. Residues 544–553 are compositionally biased toward polar residues; the sequence is NSGNAGTITS. The tract at residues 544-566 is disordered; sequence NSGNAGTITSGAPAGANPGDGGG. Residues 669 to 1196 are alpha-amylase; sequence SVLSVVTSTY…APKEVKVFTK (528 aa).

The protein in the N-terminal section; belongs to the glycosyl hydrolase 14 family. In the C-terminal section; belongs to the glycosyl hydrolase 13 family. It depends on Ca(2+) as a cofactor.

Its subcellular location is the secreted. The enzyme catalyses Hydrolysis of (1-&gt;4)-alpha-D-glucosidic linkages in polysaccharides so as to remove successive maltose units from the non-reducing ends of the chains.. It carries out the reaction Endohydrolysis of (1-&gt;4)-alpha-D-glucosidic linkages in polysaccharides containing three or more (1-&gt;4)-alpha-linked D-glucose units.. The precursor protein is proteolytically cleaved to produce multiform beta-amylases and a 48 kDa alpha-amylase after secretion. In Paenibacillus polymyxa (Bacillus polymyxa), this protein is Beta/alpha-amylase.